Reading from the N-terminus, the 520-residue chain is GMP synthase [glutamine-hydrolyzing] (520 aa).

The Glutamine amidotransferase type-1 domain maps to K9–Q202. C86 acts as the Nucleophile in catalysis. Residues H176 and E178 contribute to the active site. The 193-residue stretch at W203–R395 folds into the GMPS ATP-PPase domain. S230–S236 serves as a coordination point for ATP.

In terms of assembly, homodimer.

It catalyses the reaction XMP + L-glutamine + ATP + H2O = GMP + L-glutamate + AMP + diphosphate + 2 H(+). It functions in the pathway purine metabolism; GMP biosynthesis; GMP from XMP (L-Gln route): step 1/1. Its function is as follows. Catalyzes the synthesis of GMP from XMP. The protein is GMP synthase [glutamine-hydrolyzing] of Syntrophotalea carbinolica (strain DSM 2380 / NBRC 103641 / GraBd1) (Pelobacter carbinolicus).